The sequence spans 47 residues: Ruminococcin-A (47 aa).

The signal sequence occupies residues 1-23; it reads MRNDVLTLTNPMEEKELEQILGG. Threonine 30 and threonine 39 each carry 2,3-didehydrobutyrine. The segment at residues 30–35 is a cross-link (beta-methyllanthionine (Thr-Cys)); the sequence is TISHEC. Positions 32 to 46 form a cross-link, lanthionine (Ser-Cys); sequence SHECNMNTWQFLFTC. A cross-link (beta-methyllanthionine (Thr-Cys)) is located at residues 45–47; sequence TCC.

Maturation of lantibiotics involves the enzymatic conversion of Thr, and Ser into dehydrated AA and the formation of thioether bonds with cysteine. This is followed by membrane translocation and cleavage of the modified precursor. Post-translationally, it is not established whether the 2,3-didehydrobutyrine is the E- or Z-isomer.

It localises to the secreted. In terms of biological role, lanthionine-containing peptide antibiotic (lantibiotic) active on Gram-positive bacteria. The bactericidal activity of lantibiotics is based on depolarization of energized bacterial cytoplasmic membranes, initiated by the formation of aqueous transmembrane pores. Ruminococcin A is a broad spectrum bacteriocin exhibiting activity against a wide range of pathogenic clostridia and B.longum. The chain is Ruminococcin-A (rumA1) from Mediterraneibacter gnavus (Ruminococcus gnavus).